The primary structure comprises 209 residues: Ubiquitin-conjugating enzyme E2 S (209 aa).

The UBC core domain occupies 14–160 (QTIRQVMREL…ARMMTEIHAQ (147 aa)). The active-site Glycyl thioester intermediate is the cysteine 98. Residues 165–209 (GVGATGDAKDDGGPSTKKHAGLDKKLQDKKKEKLLKEKKRMLKRL) are disordered. Over residues 184 to 199 (AGLDKKLQDKKKEKLL) the composition is skewed to basic and acidic residues. Positions 200 to 209 (KEKKRMLKRL) are enriched in basic residues.

Belongs to the ubiquitin-conjugating enzyme family.

The catalysed reaction is S-ubiquitinyl-[E1 ubiquitin-activating enzyme]-L-cysteine + [E2 ubiquitin-conjugating enzyme]-L-cysteine = [E1 ubiquitin-activating enzyme]-L-cysteine + S-ubiquitinyl-[E2 ubiquitin-conjugating enzyme]-L-cysteine.. Its pathway is protein modification; protein ubiquitination. Functionally, catalyzes the covalent attachment of ubiquitin to other proteins. Acts as an essential factor of the anaphase promoting complex/cyclosome (APC/C), a cell cycle-regulated ubiquitin ligase that controls progression through mitosis. Acts by specifically elongating polyubiquitin chains initiated by the E2 enzyme vih/UbcH10 on APC/C substrates, enhancing the degradation of APC/C substrates by the proteasome and promoting mitotic exit. This chain is Ubiquitin-conjugating enzyme E2 S, found in Drosophila simulans (Fruit fly).